The following is a 384-amino-acid chain: Prokineticin receptor 2 (384 aa).

Topologically, residues 1-53 (MAAQNGNASFPANFSIPQEHASSLPFNFSYDDYDLPLDEDEDMTKTQTFFAAK) are extracellular. N-linked (GlcNAc...) asparagine glycosylation is found at Asn-7, Asn-13, and Asn-27. Residues 54–74 (IVIGVALVGIMLTCGIGNFVF) traverse the membrane as a helical segment. The Cytoplasmic portion of the chain corresponds to 75–89 (ITALTRYKKLRNLTN). Residues 90–110 (LLIANLAISDFLVAIICCPFE) form a helical membrane-spanning segment. Over 111-137 (MDYYVVHQLSWEHGHVLCACINYLRTV) the chain is Extracellular. The cysteines at positions 128 and 208 are disulfide-linked. A helical transmembrane segment spans residues 138 to 158 (SLYVSTNALLAIAIDRYLAIV). At 159 to 171 (HPLKPRMNYQTAS) the chain is on the cytoplasmic side. A helical membrane pass occupies residues 172 to 192 (FLIALVWMVSILISIPSAYFT). The Extracellular portion of the chain corresponds to 193 to 223 (KETVLFIVKNQKKIFCGQVWPVDQQLYYKSY). Residues 224-244 (FLFVFGIEFLGPVFTMTLCYA) form a helical membrane-spanning segment. Residues 245 to 273 (RISRELWFKAVPGFQTEQIRKRLRCRRKT) lie on the Cytoplasmic side of the membrane. Residues 274–294 (VLVLMCILTAYVLCWAPFYGF) traverse the membrane as a helical segment. The Extracellular portion of the chain corresponds to 295 to 313 (TIVRDFFPTVFVKEKHYLT). A helical transmembrane segment spans residues 314 to 334 (AFYVVECIAMSNSMINTVCFV). Residues 335–384 (TVKNSTMKYFKKMLLLHWRPSHHGSKSSADLDLKTSRLPATEEVDCIRLK) are Cytoplasmic-facing.

Belongs to the G-protein coupled receptor 1 family. As to quaternary structure, homodimer.

It localises to the cell membrane. Its function is as follows. Receptor for prokineticin 2. Exclusively coupled to the G(q) subclass of heteromeric G proteins. Activation leads to mobilization of calcium, stimulation of phosphoinositide turnover and activation of p44/p42 mitogen-activated protein kinase. This Bos taurus (Bovine) protein is Prokineticin receptor 2 (PROKR2).